A 72-amino-acid chain; its full sequence is Disintegrin basilicin (72 aa).

The Disintegrin domain occupies 1 to 72 (AGEECDCGSP…ADCPRNHFHA (72 aa)). 6 cysteine pairs are disulfide-bonded: cysteine 5/cysteine 20, cysteine 7/cysteine 15, cysteine 14/cysteine 37, cysteine 28/cysteine 34, cysteine 33/cysteine 58, and cysteine 46/cysteine 65. Residues 50–52 (RGD) carry the Cell attachment site motif.

This sequence belongs to the venom metalloproteinase (M12B) family. P-II subfamily. P-IIa sub-subfamily. As to quaternary structure, monomer (disintegrin). As to expression, expressed by the venom gland.

Its subcellular location is the secreted. Functionally, inhibits fibrinogen interaction with platelets. Acts by binding to alpha-IIb/beta-3 (ITGA2B/ITGB3) on the platelet surface and inhibits aggregation induced by ADP, thrombin, platelet-activating factor and collagen. This is Disintegrin basilicin from Crotalus basiliscus (Mexican west-coast rattlesnake).